The sequence spans 570 residues: Peptidyl-prolyl cis-trans isomerase CYP63 (570 aa).

Residues 10–174 (FLDVSIGGDP…SPVKIIDCGE (165 aa)) form the PPIase cyclophilin-type domain. A disordered region spans residues 180–570 (AHDAAEREKG…GKRGLVSYAD (391 aa)). The segment covering 203–219 (VSDREAKETRKKESNEK) has biased composition (basic and acidic residues). Low complexity-rich tracts occupy residues 229 to 238 (SSDSYSSSSD) and 246 to 259 (EAYS…SSSS). The span at 262 to 292 (KHRKRKSTTRHKGRRGERKSKGRSGKKKARP) shows a compositional bias: basic residues. Residues 297–309 (STNSSSDTESSSS) show a composition bias toward low complexity. Positions 323–339 (VKVDNADQHANLDDSVK) are enriched in basic and acidic residues. Ser-340 carries the post-translational modification Phosphoserine. A compositionally biased stretch (basic residues) spans 340 to 351 (SRSRSPIRRRNQ). Positions 352 to 365 (NSRSKSPSRSPVRV) are enriched in low complexity. Basic and acidic residues-rich tracts occupy residues 387-397 (SPREKPTEETV) and 437-467 (SPPR…ERSP). Residues 468–490 (RGRFRSPPRRRSPPRYNRRRRST) show a composition bias toward basic residues. Residues 495–505 (DGYRRRLRDGS) show a composition bias toward basic and acidic residues. Positions 509–523 (SPRHRSRSQSPRKRQ) are enriched in basic residues. Over residues 546–555 (SPAESLSPSH) the composition is skewed to low complexity.

It belongs to the cyclophilin-type PPIase family. In terms of assembly, interacts with SNRNP35, RNU1, SCL28, SCL30, SR30 and SR34. The binding to SR34 is phosphorylation-dependent. Ubiquitous.

The protein resides in the nucleus. The protein localises to the nucleoplasm. It localises to the nucleus speckle. The enzyme catalyses [protein]-peptidylproline (omega=180) = [protein]-peptidylproline (omega=0). Its function is as follows. PPIases accelerate the folding of proteins. It catalyzes the cis-trans isomerization of proline imidic peptide bonds in oligopeptides. May be implicated in the folding, transport, and assembly of proteins. Probably involved in early steps of spliceosomal assembly. The chain is Peptidyl-prolyl cis-trans isomerase CYP63 (CYP63) from Arabidopsis thaliana (Mouse-ear cress).